Reading from the N-terminus, the 181-residue chain is MFYKIYYIYPNKQLESVEDYEYVDIQSATNCMFDYIWRHKKPKPTQKITDFINMDCTYSIGIFSINVYNKYNKLICITNTNELKFSGKRIEIISRIKKIPITDNYPEHIFYVYDNLPDNTNVAVLCKICLVKICVNMKQMILQKKYPLKYSKNICAIKYMIQIIQINQQINFFVIYIFSTK.

This is an uncharacterized protein from Acanthamoeba polyphaga (Amoeba).